The sequence spans 747 residues: Catalase-peroxidase (747 aa).

The N-terminal stretch at 1–27 (MRKFSVSKVALLAATMAPALLPAAARA) is a signal peptide. Residues 116–238 (WHSAGTYRTA…LAAVQMGLIY (123 aa)) constitute a cross-link (tryptophyl-tyrosyl-methioninium (Trp-Tyr) (with M-264)). His-117 (proton acceptor) is an active-site residue. Positions 238–264 (YVNPEGPNGNPDPLLAAKDIRETFGRM) form a cross-link, tryptophyl-tyrosyl-methioninium (Tyr-Met) (with W-116). Residue His-279 coordinates heme b.

The protein belongs to the peroxidase family. Peroxidase/catalase subfamily. In terms of assembly, homodimer or homotetramer. The cofactor is heme b. Formation of the three residue Trp-Tyr-Met cross-link is important for the catalase, but not the peroxidase activity of the enzyme.

It carries out the reaction H2O2 + AH2 = A + 2 H2O. The catalysed reaction is 2 H2O2 = O2 + 2 H2O. Functionally, bifunctional enzyme with both catalase and broad-spectrum peroxidase activity. This Novosphingobium aromaticivorans (strain ATCC 700278 / DSM 12444 / CCUG 56034 / CIP 105152 / NBRC 16084 / F199) protein is Catalase-peroxidase.